A 257-amino-acid chain; its full sequence is Phosphate import ATP-binding protein PstB (257 aa).

An ABC transporter domain is found at Leu-4–Lys-246. Position 36 to 43 (Gly-36 to Ser-43) interacts with ATP.

It belongs to the ABC transporter superfamily. Phosphate importer (TC 3.A.1.7) family. The complex is composed of two ATP-binding proteins (PstB), two transmembrane proteins (PstC and PstA) and a solute-binding protein (PstS).

It is found in the cell membrane. It catalyses the reaction phosphate(out) + ATP + H2O = ADP + 2 phosphate(in) + H(+). Part of the ABC transporter complex PstSACB involved in phosphate import. Responsible for energy coupling to the transport system. The sequence is that of Phosphate import ATP-binding protein PstB from Corynebacterium glutamicum (strain ATCC 13032 / DSM 20300 / JCM 1318 / BCRC 11384 / CCUG 27702 / LMG 3730 / NBRC 12168 / NCIMB 10025 / NRRL B-2784 / 534).